The sequence spans 179 residues: ATP synthase subunit delta (179 aa).

Belongs to the ATPase delta chain family. As to quaternary structure, F-type ATPases have 2 components, F(1) - the catalytic core - and F(0) - the membrane proton channel. F(1) has five subunits: alpha(3), beta(3), gamma(1), delta(1), epsilon(1). F(0) has three main subunits: a(1), b(2) and c(10-14). The alpha and beta chains form an alternating ring which encloses part of the gamma chain. F(1) is attached to F(0) by a central stalk formed by the gamma and epsilon chains, while a peripheral stalk is formed by the delta and b chains.

It localises to the cell inner membrane. Its function is as follows. F(1)F(0) ATP synthase produces ATP from ADP in the presence of a proton or sodium gradient. F-type ATPases consist of two structural domains, F(1) containing the extramembraneous catalytic core and F(0) containing the membrane proton channel, linked together by a central stalk and a peripheral stalk. During catalysis, ATP synthesis in the catalytic domain of F(1) is coupled via a rotary mechanism of the central stalk subunits to proton translocation. Functionally, this protein is part of the stalk that links CF(0) to CF(1). It either transmits conformational changes from CF(0) to CF(1) or is implicated in proton conduction. This Burkholderia thailandensis (strain ATCC 700388 / DSM 13276 / CCUG 48851 / CIP 106301 / E264) protein is ATP synthase subunit delta.